The primary structure comprises 321 residues: Nacrein-like protein (321 aa).

The region spanning 1–319 (RGPKNWCKVH…NKNVIVYRNH (319 aa)) is the Alpha-carbonic anhydrase domain. Histidine 58 (proton acceptor) is an active-site residue.

This sequence belongs to the alpha-carbonic anhydrase family. As to expression, component of the organic matrix of calcified shell layers like nacre and prisms.

Its subcellular location is the secreted. The polypeptide is Nacrein-like protein (Mytilus californianus (California mussel)).